The chain runs to 209 residues: Cytidylyl-2-hydroxypropylphosphonate hydrolase (209 aa).

A divalent metal cation is bound by residues Asn-111, Asp-127, Glu-129, and Asp-131. Residue Lys-144 is the Proton donor of the active site. A divalent metal cation is bound at residue Asp-145.

The protein belongs to the FomD family. As to quaternary structure, monomer in solution. Requires Mn(2+) as cofactor. It depends on Co(2+) as a cofactor.

It carries out the reaction cytidine 5'-({hydroxy[(S)-2-hydroxypropyl]phosphonoyl}phosphate) + H2O = (S)-2-hydroxypropylphosphonate + CMP + H(+). It functions in the pathway antibiotic biosynthesis; fosfomycin biosynthesis. With respect to regulation, hydrolysis of (S)-HPP-CMP is inhibited by CDP. Its function is as follows. Involved in fosfomycin biosynthesis. Catalyzes the hydrolysis of cytidylyl (S)-2-hydroxypropylphosphonate ((S)-HPP-CMP) to give (S)-2-hydroxypropylphosphonate ((S)-HPP) and CMP. Can also hydrolyze (R)-HPP-CMP and cytidylyl 2-hydroxyethylphosphonate (HEP-CMP), which is a biosynthetic intermediate before C-methylation, but the catalytic efficiency is much higher with (S)-HPP-CMP. The protein is Cytidylyl-2-hydroxypropylphosphonate hydrolase of Streptomyces wedmorensis.